Here is a 308-residue protein sequence, read N- to C-terminus: Staphylococcal superantigen-like 4 (308 aa).

A signal peptide spans 1 to 30; sequence MKITTIAKTSLALGLLTTGVITTTTQAANA. The segment at 28–117 is disordered; the sequence is ANATTPSSTK…TTKQVPTEIN (90 aa). Polar residues-rich tracts occupy residues 33 to 47 and 55 to 76; these read PSST…TPPS and SKPN…TANA. Positions 77 to 93 are enriched in low complexity; that stretch reads TTPPSTKVTTPPSTNTP. Residues 94–114 are compositionally biased toward polar residues; it reads QPMQSTKSDTPQSPTTKQVPT. Residues 180 to 278 form a sialyl Lewis X-binding region; sequence VDVFVVLEEN…VIKMKNGGKY (99 aa).

This sequence belongs to the staphylococcal/streptococcal toxin family.

The protein localises to the secreted. Functionally, secreted protein that plays a role in immune innate response inhibition by interfering with host TLR2-mediated pathway. The chain is Staphylococcal superantigen-like 4 from Staphylococcus aureus (strain Newman).